Consider the following 394-residue polypeptide: MGLLQEKLAKYDLPQKFMAQGVYPYFREIEGKQGTEVEMGGHEVLMFGSNAYTGLTGDERVIEAGIKAMHKYGSGCAGSRFLNGTLDLHVQLEKELAAFVGKDEALCFSTGFTVNSGVIPALTDRNDYIICDDRDHASIVDGRRLSFSQQLKYKHNDMADLEKQLQKCNPDSVKLIIVDGVFSMEGDLANLPEIVRLKHKYNATIMVDEAHGLGVFGKQGRGVCDHFGLTHEVDLIMGTFSKSLASIGGFIAADSSIINWLRHNARTYIFSASNTPAATASALEALHIIQDEPERLEALWEATNYALKRFREAGFEIGATESPIIPLYVRDTEKTFMVTKLAFDEGVFINPVIPPACAPQDTLVRVALMATHTKDQIDRAVEKLVKAFKALDLL.

Pyridoxal 5'-phosphate is bound by residues 111–112, Ser-183, His-211, and Thr-239; that span reads GF. N6-(pyridoxal phosphate)lysine is present on Lys-242.

Belongs to the class-II pyridoxal-phosphate-dependent aminotransferase family. Pyridoxal 5'-phosphate is required as a cofactor.

The catalysed reaction is L-serine + hexadecanoyl-CoA + H(+) = 3-oxosphinganine + CO2 + CoA. Its pathway is lipid metabolism; sphingolipid metabolism. Its function is as follows. Involved in de novo bacterial ceramide synthesis. Catalyzes the condensation of L-serine with palmitoyl-CoA (hexadecanoyl-CoA) to produce 3-oxosphinganine. Also capable of using alanine as substrate leading to the formation of 1-deoxysphinganine (1-deoxySa). Contributes to the levels of endogenous sphingolipids in its host. This is Serine palmitoyltransferase from Bacteroides ovatus (strain ATCC 8483 / DSM 1896 / JCM 5824 / BCRC 10623 / CCUG 4943 / NCTC 11153).